A 356-amino-acid chain; its full sequence is tRNA-specific 2-thiouridylase MnmA (356 aa).

A6 to S13 provides a ligand contact to ATP. The active-site Nucleophile is C95. An intrachain disulfide couples C95 to C195. Residue G119 participates in ATP binding. The interaction with tRNA stretch occupies residues K145–Q147. C195 serves as the catalytic Cysteine persulfide intermediate. The tract at residues R300 to Y301 is interaction with tRNA.

This sequence belongs to the MnmA/TRMU family.

The protein resides in the cytoplasm. It catalyses the reaction S-sulfanyl-L-cysteinyl-[protein] + uridine(34) in tRNA + AH2 + ATP = 2-thiouridine(34) in tRNA + L-cysteinyl-[protein] + A + AMP + diphosphate + H(+). Functionally, catalyzes the 2-thiolation of uridine at the wobble position (U34) of tRNA, leading to the formation of s(2)U34. The chain is tRNA-specific 2-thiouridylase MnmA from Oleidesulfovibrio alaskensis (strain ATCC BAA-1058 / DSM 17464 / G20) (Desulfovibrio alaskensis).